We begin with the raw amino-acid sequence, 386 residues long: Galactokinase (386 aa).

Substrate is bound at residue 32-35 (EHTD). ATP contacts are provided by residues Ser-66 and 123 to 129 (GASLSSS). Mg(2+) is bound by residues Ser-129 and Glu-161. The active-site Proton acceptor is Asp-173. Position 223 (Tyr-223) interacts with substrate.

Belongs to the GHMP kinase family. GalK subfamily.

It is found in the cytoplasm. It carries out the reaction alpha-D-galactose + ATP = alpha-D-galactose 1-phosphate + ADP + H(+). It participates in carbohydrate metabolism; galactose metabolism. In terms of biological role, catalyzes the transfer of the gamma-phosphate of ATP to D-galactose to form alpha-D-galactose-1-phosphate (Gal-1-P). The chain is Galactokinase from Staphylococcus saprophyticus subsp. saprophyticus (strain ATCC 15305 / DSM 20229 / NCIMB 8711 / NCTC 7292 / S-41).